Reading from the N-terminus, the 394-residue chain is MPAPLFLSGSCEVCGDKTSGRHFGVMSCRACAAFFRRAATWNLEKRICPNGTCHTSVNGKFNCKQCRLKKCLDVGMDTRRFQTDRDLISCSAISQSLATFLGRPEFILCCEPDRASVLKTTIDVTRLVNIARDMLQKPTNHVLPSNSLEQLATTLDNMRCVESNKEVKFIEKYGKVETLKSWEQGFLRVVEWFSNFSEFRELNERLKLEIVKSCWFSWTRLDKLSETANKQINKMLGKSQLMVGNGACMNMNNFEIDLSWCTNYSLEQLKYFFQTPNGKKNFQQSIQDMIDLNPSSIEVSYMLLHLSLEHAGKRLHGDALDATENLVQVQANNLHKYYVEKLKLANYSSRLTQLMRITRTLEADIRIRIEKKQIADVFNIMKIDFSHPEMFEAT.

The segment at residues 8 to 83 (SGSCEVCGDK…VGMDTRRFQT (76 aa)) is a DNA-binding region (nuclear receptor). 2 NR C4-type zinc fingers span residues 11–31 (CEVC…CRAC) and 48–71 (CPNG…LKKC). The NR LBD domain maps to 134–394 (MLQKPTNHVL…FSHPEMFEAT (261 aa)).

It belongs to the nuclear hormone receptor family.

It localises to the nucleus. In terms of biological role, orphan nuclear receptor. This chain is Nuclear hormone receptor family member nhr-18 (nhr-18), found in Caenorhabditis elegans.